A 127-amino-acid chain; its full sequence is Large ribosomal subunit protein uL18 (127 aa).

The protein belongs to the universal ribosomal protein uL18 family. In terms of assembly, part of the 50S ribosomal subunit; part of the 5S rRNA/L5/L18/L25 subcomplex. Contacts the 5S and 23S rRNAs.

In terms of biological role, this is one of the proteins that bind and probably mediate the attachment of the 5S RNA into the large ribosomal subunit, where it forms part of the central protuberance. The sequence is that of Large ribosomal subunit protein uL18 from Streptomyces coelicolor (strain ATCC BAA-471 / A3(2) / M145).